We begin with the raw amino-acid sequence, 156 residues long: MGRGKITARRPVAPDSKYNSVVVTRFIGRMMLSGKKSITTKIMYDSFDKIKEKTGEEPLAVFSKALDNVKPVVEVKSRRVGGATYQVPMDIPEGRREALAMRWIIGAARKRSGHEMSERLASELIDAYNNTGTAFKKKEEVHRMAEANKAFAHFRW.

Belongs to the universal ribosomal protein uS7 family. As to quaternary structure, part of the 30S ribosomal subunit. Contacts proteins S9 and S11.

Functionally, one of the primary rRNA binding proteins, it binds directly to 16S rRNA where it nucleates assembly of the head domain of the 30S subunit. Is located at the subunit interface close to the decoding center, probably blocks exit of the E-site tRNA. This chain is Small ribosomal subunit protein uS7, found in Treponema denticola (strain ATCC 35405 / DSM 14222 / CIP 103919 / JCM 8153 / KCTC 15104).